Reading from the N-terminus, the 410-residue chain is Peptidase T (410 aa).

Residues 11 to 30 (RYAEIDTQSDPDSESTPSTE) form a disordered region. His-78 is a Zn(2+) binding site. Residue Asp-80 is part of the active site. Residue Asp-140 coordinates Zn(2+). Glu-174 acts as the Proton acceptor in catalysis. Zn(2+) contacts are provided by Glu-175, Asp-197, and His-379.

It belongs to the peptidase M20B family. Requires Zn(2+) as cofactor.

The protein localises to the cytoplasm. The enzyme catalyses Release of the N-terminal residue from a tripeptide.. Cleaves the N-terminal amino acid of tripeptides. In Staphylococcus carnosus (strain TM300), this protein is Peptidase T.